The following is a 676-amino-acid chain: Pescadillo homolog (676 aa).

A disordered region spans residues 277–296; sequence TIEGSNKQSNNSSNQEVSRD. A compositionally biased stretch (low complexity) spans 281 to 291; the sequence is SNKQSNNSSNQ. The region spanning 351 to 467 is the BRCT domain; it reads EAGALFAPFT…KLLRPDLYAP (117 aa). The tract at residues 471 to 676 is disordered; that stretch reads LPPHLSPWVK…RRKLEKTGEK (206 aa). Over residues 494–519 the composition is skewed to acidic residues; it reads EQEEEGEAEMAGEEEEEESDEEMEEA. Over residues 520 to 531 the composition is skewed to basic and acidic residues; it reads PETKKADAKADE. Composition is skewed to acidic residues over residues 532 to 541 and 548 to 581; these read SESEDEDESV and ADSD…DEEE. The stretch at 571–676 forms a coiled coil; the sequence is EAASESEDEE…RRKLEKTGEK (106 aa). A compositionally biased stretch (basic and acidic residues) spans 582-592; the sequence is AARTQHQKELE. The span at 611–624 shows a compositional bias: basic residues; that stretch reads KKKSSQAKKIAAKK. Residues 625-635 are compositionally biased toward basic and acidic residues; that stretch reads RKEEEELERQK.

It belongs to the pescadillo family. Component of the NOP7 complex, composed of erb1, nop7 and ytm1. The complex is held together by erb1, which interacts with nop7 via its N-terminal domain and with ytm1 via a high-affinity interaction between the seven-bladed beta-propeller domains of the 2 proteins. The NOP7 complex associates with the 66S pre-ribosome.

It localises to the nucleus. Its subcellular location is the nucleolus. The protein localises to the nucleoplasm. Component of the NOP7 complex, which is required for maturation of the 25S and 5.8S ribosomal RNAs and formation of the 60S ribosome. In Aspergillus terreus (strain NIH 2624 / FGSC A1156), this protein is Pescadillo homolog (nop7).